The sequence spans 1221 residues: DNA-directed RNA polymerase subunit beta' (1221 aa).

Residues C60, C62, C75, and C78 each contribute to the Zn(2+) site. Mg(2+) is bound by residues D449, D451, and D453. 4 residues coordinate Zn(2+): C821, C896, C903, and C906.

Belongs to the RNA polymerase beta' chain family. As to quaternary structure, the RNAP catalytic core consists of 2 alpha, 1 beta, 1 beta' and 1 omega subunit. When a sigma factor is associated with the core the holoenzyme is formed, which can initiate transcription. Requires Mg(2+) as cofactor. The cofactor is Zn(2+).

The enzyme catalyses RNA(n) + a ribonucleoside 5'-triphosphate = RNA(n+1) + diphosphate. DNA-dependent RNA polymerase catalyzes the transcription of DNA into RNA using the four ribonucleoside triphosphates as substrates. The chain is DNA-directed RNA polymerase subunit beta' from Lactobacillus delbrueckii subsp. bulgaricus (strain ATCC BAA-365 / Lb-18).